Consider the following 340-residue polypeptide: Phosphoribosylformylglycinamidine cyclo-ligase (340 aa).

This sequence belongs to the AIR synthase family.

Its subcellular location is the cytoplasm. It catalyses the reaction 2-formamido-N(1)-(5-O-phospho-beta-D-ribosyl)acetamidine + ATP = 5-amino-1-(5-phospho-beta-D-ribosyl)imidazole + ADP + phosphate + H(+). It participates in purine metabolism; IMP biosynthesis via de novo pathway; 5-amino-1-(5-phospho-D-ribosyl)imidazole from N(2)-formyl-N(1)-(5-phospho-D-ribosyl)glycinamide: step 2/2. The sequence is that of Phosphoribosylformylglycinamidine cyclo-ligase from Streptococcus pneumoniae serotype 19F (strain G54).